A 122-amino-acid chain; its full sequence is Chorismate mutase AroH (122 aa).

In terms of domain architecture, Chorismate mutase aroH-type spans 2-120; that stretch reads VRGIRGAITV…AVRLRPDLES (119 aa). Residues arginine 6, arginine 89, and tyrosine 107 each coordinate prephenate.

Homotrimer.

It is found in the cytoplasm. It catalyses the reaction chorismate = prephenate. Its pathway is metabolic intermediate biosynthesis; prephenate biosynthesis; prephenate from chorismate: step 1/1. Inhibited by 40% with 500 uM tyrosine, and a tyrosine concentration as high as 5 mM reduced activity to 5%. Catalyzes the Claisen rearrangement of chorismate to prephenate. Probably involved in the aromatic amino acid biosynthesis. This is Chorismate mutase AroH from Thermus thermophilus.